The sequence spans 225 residues: Transcriptional regulatory protein CssR (225 aa).

In terms of domain architecture, Response regulatory spans 4–117 (TIYLVEDEDN…ELIIRVQKLL (114 aa)). Asp-52 carries the post-translational modification 4-aspartylphosphate. The ompR/PhoB-type DNA-binding region spans 129–224 (KNEIAVSSYR…IYGFGYRMMS (96 aa)).

Post-translationally, phosphorylated by CssS.

It localises to the cytoplasm. Member of the two-component regulatory system CssS/CssR required to control the cellular response to secretion stress. The protein is Transcriptional regulatory protein CssR (cssR) of Bacillus subtilis (strain 168).